The primary structure comprises 623 residues: Prothrombin (623 aa).

The signal sequence occupies residues M1–S24. Positions Q25–R43 are excised as a propeptide. In terms of domain architecture, Gla spans A44–A90. A 4-carboxyglutamate mark is found at E50, E51, E58, E60, E63, E64, E69, E70, E73, and E76. An intrachain disulfide couples C61 to C66. 11 disulfide bridges follow: C91/C104, C109/C187, C130/C170, C158/C182, C214/C292, C235/C275, C263/C287, C337/C483, C392/C408, C537/C551, and C565/C595. 2 consecutive Kringle domains span residues N108–C187 and Q213–C292. N-linked (GlcNAc...) asparagine glycans are attached at residues N122 and N144. A Peptidase S1 domain is found at I365–D619. Catalysis depends on H407, which acts as the Charge relay system. The N-linked (GlcNAc...) asparagine glycan is linked to N417. D463 functions as the Charge relay system in the catalytic mechanism. A high affinity receptor-binding region which also known as the TP508 peptide region spans residues A552–V574. The active-site Charge relay system is S569.

The protein belongs to the peptidase S1 family. Heterodimer (named alpha-thrombin) of a light and a heavy chain; disulfide-linked. Forms a heterodimer with SERPINA5. In plasma, interacts (via N-terminus) with alpha-1-microglobulin; this interaction does not prevent the activation of prothrombin to thrombin. Post-translationally, the gamma-carboxyglutamyl residues, which bind calcium ions, result from the carboxylation of glutamyl residues by a microsomal enzyme, the vitamin K-dependent carboxylase. The modified residues are necessary for the calcium-dependent interaction with a negatively charged phospholipid surface, which is essential for the conversion of prothrombin to thrombin. In terms of processing, in the penultimate step of the coagulation cascade, prothrombin is converted to thrombin by the prothrombinase complex composed of factor Xa (F10), cofactor Va (F5), and phospholipids. This activation requires factor Xa-catalyzed sequential cleavage at 2 sites, Arg-315 and Arg-364, along 2 possible pathways. In the first pathway, the first cleavage occurs at Arg-315, leading to the formation of the inactive intermediate prethrombin-2. This pathway preferentially occurs on platelets and in the absence of cofactor Va. In the second pathway, the first cleavage occurs at Arg-364, which separates protease domain into 2 chains that remain connected through a disulfide bond and generates the active intermediate meizothrombin. The presence of cofactor Va directs activation along the meizothrombin pathway and greatly accelerates the rate of cleavage at Arg-364, but has a smaller effect on the cleavage of meizothrombin at Arg-315. Meizothrombin accumulates as an intermediate when prothrombinase is assembled on the membrane of red blood cells.

The catalysed reaction is Selective cleavage of Arg-|-Gly bonds in fibrinogen to form fibrin and release fibrinopeptides A and B.. Its activity is regulated as follows. Activity is promoted in the presence of negatively charged surfaces, such as polyphosphate and dextran sulfate. Inhibited by SERPINA5. Functionally, thrombin, which cleaves bonds after Arg and Lys, converts fibrinogen to fibrin and activates factors V, VII, VIII, XIII, and, in complex with thrombomodulin, protein C. Functions in blood homeostasis, inflammation and wound healing. Activates coagulation factor XI (F11); activation is promoted by the contact with negatively charged surfaces. Triggers the production of pro-inflammatory cytokines, such as MCP-1/CCL2 and IL8/CXCL8, in endothelial cells. This chain is Prothrombin (F2), found in Pongo abelii (Sumatran orangutan).